The primary structure comprises 118 residues: MGIKYSNKINKIRTFALSLVFIGLFIAYLGVFFRENIIIMTTFMMVGFLAVIASTVVYFWIGMLSTKTVQIICPSCDKPTKMLGRVDACMHCNQPLTMDRNLEGKEFDEKYNKKSYKS.

A run of 2 helical transmembrane segments spans residues 12–32 and 43–63; these read IRTF…LGVF and FMMV…WIGM.

This sequence belongs to the UPF0295 family.

It is found in the cell membrane. This chain is UPF0295 protein BCE_0593, found in Bacillus cereus (strain ATCC 10987 / NRS 248).